Reading from the N-terminus, the 275-residue chain is ATP synthase subunit a (275 aa).

The next 7 helical transmembrane spans lie at 46–66, 104–124, 135–155, 166–186, 204–224, 231–251, and 252–272; these read RLMLIRLLMSVLVAAFFVIAM, FLPVITTIFFIVVASNMASII, IGMPLVLAALAYIVFNYVGIK, SIVVPGVPLPLHFLLVPIEFI, MLAGHILLVLFFSATNYFFFV, IFGVPSIIAGIAFTFFELLVI, and FLQAYVFALLTAVYIELALHA.

Belongs to the ATPase A chain family. As to quaternary structure, F-type ATPases have 2 components, CF(1) - the catalytic core - and CF(0) - the membrane proton channel. CF(1) has five subunits: alpha(3), beta(3), gamma(1), delta(1), epsilon(1). CF(0) has three main subunits: a(1), b(2) and c(9-12). The alpha and beta chains form an alternating ring which encloses part of the gamma chain. CF(1) is attached to CF(0) by a central stalk formed by the gamma and epsilon chains, while a peripheral stalk is formed by the delta and b chains.

Its subcellular location is the cell membrane. In terms of biological role, key component of the proton channel; it plays a direct role in the translocation of protons across the membrane. The polypeptide is ATP synthase subunit a (Rhodococcus erythropolis (strain PR4 / NBRC 100887)).